Consider the following 841-residue polypeptide: Translation initiation factor IF-2 (841 aa).

The disordered stretch occupies residues 87–254 (RKKKVFVQRS…KRNAHGFQSP (168 aa)). Residues 96–135 (SPEEIEAERKREMDERRAVENAARQKAEEEAKRRAEEDAR) show a composition bias toward basic and acidic residues. The segment covering 136-175 (SQPAASQSAPAAAEPVAAAEPVREAAPAAAPAPASAAPSA) has biased composition (low complexity). Basic and acidic residues-rich tracts occupy residues 176–217 (DARK…EKAP) and 225–234 (TTDEESDSFR). Basic residues predominate over residues 235-248 (RGGRGKGKLKKRNA). The 170-residue stretch at 341–510 (SRAPVVTVMG…LLQAEVLELK (170 aa)) folds into the tr-type G domain. The G1 stretch occupies residues 350 to 357 (GHVDHGKT). 350–357 (GHVDHGKT) serves as a coordination point for GTP. The G2 stretch occupies residues 375–379 (GITQH). A G3 region spans residues 396 to 399 (DTPG). Residues 396–400 (DTPGH) and 450–453 (NKID) each bind GTP. Residues 450 to 453 (NKID) are G4. The interval 486-488 (SAK) is G5.

Belongs to the TRAFAC class translation factor GTPase superfamily. Classic translation factor GTPase family. IF-2 subfamily.

It localises to the cytoplasm. Functionally, one of the essential components for the initiation of protein synthesis. Protects formylmethionyl-tRNA from spontaneous hydrolysis and promotes its binding to the 30S ribosomal subunits. Also involved in the hydrolysis of GTP during the formation of the 70S ribosomal complex. The polypeptide is Translation initiation factor IF-2 (Pseudomonas syringae pv. syringae (strain B728a)).